Consider the following 369-residue polypeptide: Mycofactocin maturase MftC (369 aa).

The 217-residue stretch at Leu-16–Ser-232 folds into the Radical SAM core domain. Cys-30, Cys-34, Cys-37, Cys-251, Cys-258, Cys-269, Cys-310, Cys-313, Cys-319, Cys-323, and Cys-341 together coordinate [4Fe-4S] cluster. Residues Ala-347–Glu-369 are disordered. Residues Gln-352–Glu-369 show a composition bias toward basic and acidic residues.

The protein belongs to the radical SAM superfamily. MftC family. Interacts with MftB. It depends on [4Fe-4S] cluster as a cofactor.

The enzyme catalyses [mycofactocin precursor peptide]-C-terminal glycyl-L-valyl-L-tyrosine + S-adenosyl-L-methionine = [mycofactocin precursor peptide]-C-terminal glycyl-N-{[2-(4-hydroxyphenyl)ethenyl]-3-methylbutanamide} + 5'-deoxyadenosine + L-methionine + CO2. It catalyses the reaction [mycofactocin precursor peptide]-C-terminal glycyl-N-{[2-(4-hydroxyphenyl)ethenyl]-3-methylbutanamide} + AH2 + S-adenosyl-L-methionine = [mycofactocin precursor peptide]-C-terminal glycyl-N-{5-[(4-hydroxyphenyl)methyl]-4,4-dimethyl-2-oxopyrrolidin-3-yl}acetamide + 5'-deoxyadenosine + L-methionine + A + H(+). Its function is as follows. Radical S-adenosylmethionine (SAM) enzyme responsible for the first step of the biosynthesis of the enzyme cofactor mycofactocin (MFT). Catalyzes two reactions at the C-terminus of the mycofactocin precursor (the MftA peptide). The first one is the oxidative decarboxylation of the C-terminal L-tyrosine of MftA, forming an unsaturated tyramine moiety. The second reaction is the cross-linking of the tyramine with the penultimate L-valine residue, forming a five-membered lactam ring. Its activity requires the presence of the MftB chaperone. The chain is Mycofactocin maturase MftC from Mycobacterium ulcerans (strain Agy99).